Reading from the N-terminus, the 99-residue chain is Protein translation factor SUI1 homolog (99 aa).

This sequence belongs to the SUI1 family.

The protein is Protein translation factor SUI1 homolog of Sulfolobus acidocaldarius (strain ATCC 33909 / DSM 639 / JCM 8929 / NBRC 15157 / NCIMB 11770).